Reading from the N-terminus, the 195-residue chain is Putative inactive carbonic anhydrase 5B-like protein (195 aa).

121-122 provides a ligand contact to substrate; sequence TT.

This sequence belongs to the alpha-carbonic anhydrase family.

This Homo sapiens (Human) protein is Putative inactive carbonic anhydrase 5B-like protein (CA5BP1).